A 273-amino-acid polypeptide reads, in one-letter code: E3 ubiquitin-protein ligase SDIR1 (273 aa).

Residues 1–33 lie on the Cytoplasmic side of the membrane; the sequence is MSFVFRGSRGDLESGFSGGFLPERRAMRVHGAR. The helical transmembrane segment at 34 to 54 threads the bilayer; that stretch reads PVNSNSLAFLVTVLLLFMILN. Residues 55–56 lie on the Lumenal side of the membrane; that stretch reads SH. A helical membrane pass occupies residues 57-77; it reads QMPPNFLLWLVLGVFLMATTL. Residues 78–273 lie on the Cytoplasmic side of the membrane; it reads RMYATCQQLQ…EIDDDASDMV (196 aa). The RING-type; atypical zinc-finger motif lies at 211 to 252; that stretch reads CSVCLEQVTVGEIVRTLPCLHQFHAGCIDPWLRQQGTCPVCK.

In terms of assembly, interacts with ATP1/SDIRIP1. As to expression, ubiquitous.

The protein localises to the endoplasmic reticulum membrane. The enzyme catalyses S-ubiquitinyl-[E2 ubiquitin-conjugating enzyme]-L-cysteine + [acceptor protein]-L-lysine = [E2 ubiquitin-conjugating enzyme]-L-cysteine + N(6)-ubiquitinyl-[acceptor protein]-L-lysine.. E3 ubiquitin-protein ligase that acts as a positive regulator of abscisic acid-related stress signal transduction. Interacts with and ubiquitinates ATP1/SDIRIP1 to modulate ATP1/SDIRIP1 stability through the 26S proteasome pathway. Regulates abscisic acid (ABA) and salt stress responses by negatively affecting ATP1/SDIRIP1 stability. The SDIR1-ATP1/SDIRIP1 complex plays an important role in ABA signaling through the ubiquitination pathway. In Arabidopsis thaliana (Mouse-ear cress), this protein is E3 ubiquitin-protein ligase SDIR1.